A 359-amino-acid polypeptide reads, in one-letter code: DNA polymerase IV (359 aa).

In terms of domain architecture, UmuC spans 4-185 (IIHIDMDCYF…LSLRKIPGVG (182 aa)). Residues aspartate 8 and aspartate 103 each contribute to the Mg(2+) site. The active site involves glutamate 104.

Belongs to the DNA polymerase type-Y family. As to quaternary structure, monomer. Mg(2+) is required as a cofactor.

It is found in the cytoplasm. The enzyme catalyses DNA(n) + a 2'-deoxyribonucleoside 5'-triphosphate = DNA(n+1) + diphosphate. In terms of biological role, poorly processive, error-prone DNA polymerase involved in untargeted mutagenesis. Copies undamaged DNA at stalled replication forks, which arise in vivo from mismatched or misaligned primer ends. These misaligned primers can be extended by PolIV. Exhibits no 3'-5' exonuclease (proofreading) activity. May be involved in translesional synthesis, in conjunction with the beta clamp from PolIII. The polypeptide is DNA polymerase IV (Shewanella sp. (strain ANA-3)).